We begin with the raw amino-acid sequence, 1551 residues long: Serine/threonine-protein kinase MRCK gamma (1551 aa).

The Protein kinase domain occupies 71 to 337 (FEILKVIGRG…LDDFRNHPFF (267 aa)). Residues 77–85 (IGRGAFGEV) and lysine 100 each bind ATP. Aspartate 195 (proton acceptor) is an active-site residue. Phosphoserine; by autocatalysis is present on residues serine 216 and serine 228. Threonine 234 bears the Phosphothreonine; by autocatalysis mark. Residues 338–408 (EGVDWERLAS…TSGSHSPESS (71 aa)) form the AGC-kinase C-terminal domain. Coiled-coil stretches lie at residues 406–678 (ESSS…SNWE) and 730–802 (KARR…RARG). Disordered regions lie at residues 467-486 (KASL…QDSD), 655-675 (ELAQ…ETES), 801-849 (RGPV…PEGR), and 863-886 (TANT…PRSF). Basic and acidic residues predominate over residues 655–674 (ELAQEQESKQRLEGERRETE). Over residues 835–849 (ATRHGGEPDLRPEGR) the composition is skewed to basic and acidic residues. The Phorbol-ester/DAG-type zinc finger occupies 878–927 (SHTLRPRSFPSPTKCLRCTSLMLGLGRQGLGCDACGYFCHTTCAPQAPPC). Residues 947 to 1066 (GTAYEGFLSV…WLQVLGELQR (120 aa)) form the PH domain. The region spanning 1092-1366 (LPHTLCAAIL…RPLNPEGSLF (275 aa)) is the CNH domain. In terms of domain architecture, CRIB spans 1437-1450 (ISPPTNFNHLVHVG). The tract at residues 1442 to 1551 (NFNHLVHVGP…PLSPELESSP (110 aa)) is disordered. A compositionally biased stretch (basic and acidic residues) spans 1457-1470 (GARDKSPAPEEKGR). Serine 1482 bears the Phosphoserine mark. Residues 1511–1533 (TSLSSESVSCPQGSLSPATSLMQ) show a composition bias toward polar residues. Residues 1540–1551 (SLPLSPELESSP) show a composition bias toward low complexity.

This sequence belongs to the protein kinase superfamily. AGC Ser/Thr protein kinase family. DMPK subfamily. Homodimer and homotetramer via the coiled coil regions. Interacts tightly with GTP-bound but not GDP-bound CDC42. Requires Mg(2+) as cofactor. Expressed in heart and skeletal muscle.

The protein localises to the cytoplasm. The enzyme catalyses L-seryl-[protein] + ATP = O-phospho-L-seryl-[protein] + ADP + H(+). It carries out the reaction L-threonyl-[protein] + ATP = O-phospho-L-threonyl-[protein] + ADP + H(+). Maintained in an inactive, closed conformation by an interaction between the kinase domain and the negative autoregulatory C-terminal coiled-coil region. Agonist binding to the phorbol ester binding site disrupts this, releasing the kinase domain to allow N-terminus-mediated dimerization and kinase activation by transautophosphorylation. Its function is as follows. May act as a downstream effector of CDC42 in cytoskeletal reorganization. Contributes to the actomyosin contractility required for cell invasion, through the regulation of MYPT1 and thus MLC2 phosphorylation. The chain is Serine/threonine-protein kinase MRCK gamma from Homo sapiens (Human).